The chain runs to 190 residues: MSTDTALVIGLGNPGPQYEKTRHNVGFMVAGTLAGRMGGKFNVHKKSGAEIVEGRLAGRRVILGKPRSYMNLSGGAVAGLARFFSVDAANIIVVHDELDLDFGTIRLKLGGGEGGHNGLRSISSSLTTKDYLRTRVGIGRPPGRMDPADYVLKPFSSTERKELDLVCEEAADAVELLLELGLEAAQNRLH.

Tyr-18 contributes to the tRNA binding site. The active-site Proton acceptor is His-23. The tRNA site is built by Tyr-69, Asn-71, and Asn-117.

It belongs to the PTH family. As to quaternary structure, monomer.

It is found in the cytoplasm. It catalyses the reaction an N-acyl-L-alpha-aminoacyl-tRNA + H2O = an N-acyl-L-amino acid + a tRNA + H(+). In terms of biological role, hydrolyzes ribosome-free peptidyl-tRNAs (with 1 or more amino acids incorporated), which drop off the ribosome during protein synthesis, or as a result of ribosome stalling. Its function is as follows. Catalyzes the release of premature peptidyl moieties from peptidyl-tRNA molecules trapped in stalled 50S ribosomal subunits, and thus maintains levels of free tRNAs and 50S ribosomes. The chain is Peptidyl-tRNA hydrolase from Rhodococcus erythropolis (strain PR4 / NBRC 100887).